Here is a 1203-residue protein sequence, read N- to C-terminus: MKVTVCFGRTGIVVPCKDGQLRVRELTQQALQRYLKTRDQDPGYWVKIHHLEYTDGGILDPDDVLADVVEDKDKLIAVFDEQEPLQKTESPGGNPADRQSPDAFETEVAAQLAAFKPVGGEIVVTPSALKLGTPLLVRRSSDPAPGPHADAQPSTASLSGQSLKPVVLDSTQNVENKEAMNGEQAGLLSLHRPKDELSDMTRAVEISGEGDPLGIHVVPFFSSLSGRILGLFIRGIEENSRCKQEGLFQENECIVKINNVELLDKTFAQAQDVFRQAMKSPSVILHVLLPQNREQYEKSVIGPLNIFGNNDGASRTKAAPPARGKPGLKAVHLTRASSPEGEEPASPQQSKSPRVPRLGRKPSSPSLSPLMGFGSKKNAKKIKIDLKKGPEGLGFTVVTRDSSIHGPGPIFVKNILPKGAAVKDGRLQSGDRILEVNGRDVTGRTQEELVAMLRSTKQGETVSLVIARQEGSFLPRELKGEPDCYALSLESSEQLTLEIPLNDSGSAGLGVSLKGNKSRETGTDLGIFIKSIIHGGAAFKDGRLRMNDQLIAVNGETLLGKSNHEAMETLRRSMSMEGNIRGMIQLVILRRPERPLEELSECGALSRPGFENCQEALSTSRRNDSSILYPFGTYSPQDKRKDLLLPSDGWAENEVPPSPPPHPALEWGLEDFSHSSGVDSTGYFPDQHVNFRTVTPVRQPELINLKASKSMDLVPDEGKVQSLADRRSDSPGKDFGPTLGLKKSSSLESLQTAVAEVRKNDLPFHRPRPHMVRGRGCNESFRAAIDKSYDGPEEADADGLSDKSSRSGHTALNCESAPQGNPELDNVENKAKNIKKTKEKEKKKGKGKLKVKEKKLKEEHEDAERKMKRKGFGAMLRFGKKKDDKVGKAEQKGAQKSGHPEEEELERMKEERERIGAKHQELREKQARGLVDYATAVTGPVHDMDDDEMDPNYARVNHFREPCASANVFRSPSPLRAGPLAYPRDGRPLSPDHLEGLYAKVNKPYHPPALADSGRPMAGTTDRIQKLRKEYYQARREGFLLYEDENTRARPSDHDLRWVSGKGPDGSTHNLRFEGMERQYASLPRGGSADPVDYLTASPRGRYNDRELPYYPGPHPVHAPRGSYPRPPDLRATDLRYPQYYPPPPAHQHKGPFRQDVPPSPPQHQRVPVYQEMGRAGPRGSSPDQYPYRNQDPRQKNPMTAAV.

2 disordered regions span residues 79 to 104 (FDEQ…PDAF) and 138 to 162 (RRSS…SGQS). Ser100 bears the Phosphoserine mark. Residues 152–162 (QPSTASLSGQS) are compositionally biased toward polar residues. One can recognise a PDZ 1 domain in the interval 201 to 289 (TRAVEISGEG…SPSVILHVLL (89 aa)). The tract at residues 334–374 (TRASSPEGEEPASPQQSKSPRVPRLGRKPSSPSLSPLMGFG) is disordered. Ser346, Ser352, and Ser368 each carry phosphoserine. 2 consecutive PDZ domains span residues 383 to 468 (KIDL…VIAR) and 496 to 585 (TLEI…GMIQ). Residues Ser635, Ser710, Ser728, Ser730, Ser746, Ser749, and Ser801 each carry the phosphoserine modification. Basic and acidic residues predominate over residues 718–732 (GKVQSLADRRSDSPG). The interval 718–743 (GKVQSLADRRSDSPGKDFGPTLGLKK) is disordered. Disordered stretches follow at residues 787-927 (KSYD…EKQA), 968-994 (VFRS…PDHL), and 1050-1203 (RPSD…TAAV). A Phosphothreonine modification is found at Thr810. A compositionally biased stretch (basic and acidic residues) spans 827–842 (VENKAKNIKKTKEKEK). Basic residues predominate over residues 843 to 854 (KKGKGKLKVKEK). Basic and acidic residues-rich tracts occupy residues 855 to 865 (KLKEEHEDAER), 881 to 893 (KKDD…EQKG), 906 to 927 (ERMK…EKQA), and 984 to 994 (RDGRPLSPDHL). Residues Ser1088 and Ser1182 each carry the phosphoserine modification.

It belongs to the PAR3 family. As to quaternary structure, interacts with PARD6B. Interacts with INSC/inscuteable.

The protein localises to the endomembrane system. It is found in the cell junction. It localises to the tight junction. Putative adapter protein involved in asymmetrical cell division and cell polarization processes. May play a role in the formation of epithelial tight junctions. The polypeptide is Partitioning defective 3 homolog B (Pard3b) (Mus musculus (Mouse)).